A 390-amino-acid polypeptide reads, in one-letter code: Precorrin-6Y C(5,15)-methyltransferase [decarboxylating] (390 aa).

Belongs to the precorrin methyltransferase family.

The catalysed reaction is precorrin-6B + 2 S-adenosyl-L-methionine = precorrin-8X + 2 S-adenosyl-L-homocysteine + CO2 + 3 H(+). It participates in cofactor biosynthesis; adenosylcobalamin biosynthesis; cob(II)yrinate a,c-diamide from precorrin-2 (aerobic route): step 7/10. Catalyzes the methylation of both C-5 and C-15 in precorrin-6Y to form precorrin-8X. This is Precorrin-6Y C(5,15)-methyltransferase [decarboxylating] (cobL) from Mycobacterium tuberculosis (strain CDC 1551 / Oshkosh).